The sequence spans 1392 residues: DNA-directed RNA polymerase subunit beta (1392 aa).

Belongs to the RNA polymerase beta chain family. As to quaternary structure, the RNAP catalytic core consists of 2 alpha, 1 beta, 1 beta' and 1 omega subunit. When a sigma factor is associated with the core the holoenzyme is formed, which can initiate transcription.

The catalysed reaction is RNA(n) + a ribonucleoside 5'-triphosphate = RNA(n+1) + diphosphate. DNA-dependent RNA polymerase catalyzes the transcription of DNA into RNA using the four ribonucleoside triphosphates as substrates. In Neisseria gonorrhoeae (strain NCCP11945), this protein is DNA-directed RNA polymerase subunit beta.